The chain runs to 113 residues: Iron-sulfur cluster insertion protein ErpA (113 aa).

Iron-sulfur cluster-binding residues include cysteine 41, cysteine 105, and cysteine 107.

It belongs to the HesB/IscA family. As to quaternary structure, homodimer. The cofactor is iron-sulfur cluster.

Required for insertion of 4Fe-4S clusters for at least IspG. This chain is Iron-sulfur cluster insertion protein ErpA, found in Actinobacillus pleuropneumoniae serotype 3 (strain JL03).